A 429-amino-acid chain; its full sequence is MSFLSIVRDVRDTVGSFSRRSFDVRVSNGTTHQRSKSHGVEAHIEDLIVIKNTRWANLPAALLRDVMKKLDESESTWPARKQVVACAGVCKTWRLMCKDIVKSPEFSGKLTFPVSLKQPGPRDGIIQCYIKRDKSNMTYHLYLSLSPAILVESGKFLLSAKRSRRATYTEYVISMDADNISRSSSTYIGKLKSNFLGTKFIVYDTAPAYNSSQILSPPNRSRSFNSKKVSPKVPSGSYNIAQVTYELNLLGTRGPRRMNCIMHSIPSLALEPGGTVPSQPEFLQRSLDESFRSIGSSKIVNHSGDFTRPKEEEGKVRPLVLKTKPPRWLQPLRCWCLNFKGRVTVASVKNFQLMSAATVQPGSGSDGGALATRPSLSPQQPEQSNHDKIILHFGKVGKDMFTMDYRYPLSAFQAFAISLSTFDTKLACE.

The 56-residue stretch at 53 to 108 (TRWANLPAALLRDVMKKLDESESTWPARKQVVACAGVCKTWRLMCKDIVKSPEFSG) folds into the F-box domain. Positions 360–385 (QPGSGSDGGALATRPSLSPQQPEQSN) are disordered. Positions 374–383 (PSLSPQQPEQ) are enriched in polar residues.

The protein belongs to the TUB family. In terms of tissue distribution, mostly expressed in roots, flowers and siliques.

The chain is Tubby-like F-box protein 5 from Arabidopsis thaliana (Mouse-ear cress).